A 463-amino-acid polypeptide reads, in one-letter code: MSTNQIILTDQGDNYVNVWSHVAQDLYNHYGETLYNSWFSKVNFIESSLNTVILCAPTNFVRDWIKSKYSMVILQLFQHYNNTIKSIEIITKELPGTTQTVIELPTKTFADIGSSELNSENIFSTLDVRFTFDNFVVGAPNELAYAAARAVAESSGAVSESNPLFLYGGVGLGKTHLMHAIGWYIKQNNPSRKVIYMSAEKFMYQFVKALRNKEVISFKEKFRSVDVLMIDDIQFICGKDSTQEEFFHTFNTLIDNNRQMVISCDRSPSDLDNIEDRIKSRLGWGLVADVHSTTYELRLGILESKIEQMNVKIPKDVIDFLASKIVSNVRELEGALNKVIAHSNFTLKEITLENTQNILRDLLRSNERIITVEDIQKKVASRYNIKLSDMSSSRRLREVARPRQIAMYLSKALTPKSLADIGKKFGKKDHTTVMHAIKKVEELLENDIELREEINLLMKILQN.

The tract at residues 1–83 is domain I, interacts with DnaA modulators; it reads MSTNQIILTD…LQLFQHYNNT (83 aa). Residues 83–124 form a domain II region; sequence TIKSIEIITKELPGTTQTVIELPTKTFADIGSSELNSENIFS. The tract at residues 125 to 343 is domain III, AAA+ region; that stretch reads TLDVRFTFDN…GALNKVIAHS (219 aa). ATP contacts are provided by Gly171, Gly173, Lys174, and Thr175. Residues 344-463 are domain IV, binds dsDNA; sequence NFTLKEITLE…INLLMKILQN (120 aa).

The protein belongs to the DnaA family. Oligomerizes as a right-handed, spiral filament on DNA at oriC.

Its subcellular location is the cytoplasm. In terms of biological role, plays an essential role in the initiation and regulation of chromosomal replication. ATP-DnaA binds to the origin of replication (oriC) to initiate formation of the DNA replication initiation complex once per cell cycle. Binds the DnaA box (a 9 base pair repeat at the origin) and separates the double-stranded (ds)DNA. Forms a right-handed helical filament on oriC DNA; dsDNA binds to the exterior of the filament while single-stranded (ss)DNA is stabiized in the filament's interior. The ATP-DnaA-oriC complex binds and stabilizes one strand of the AT-rich DNA unwinding element (DUE), permitting loading of DNA polymerase. After initiation quickly degrades to an ADP-DnaA complex that is not apt for DNA replication. Binds acidic phospholipids. This chain is Chromosomal replication initiator protein DnaA, found in Rickettsia felis (strain ATCC VR-1525 / URRWXCal2) (Rickettsia azadi).